The sequence spans 748 residues: Transcription factor hmgR (748 aa).

The segment at residues 24 to 59 is a DNA-binding region (zn(2)-C6 fungal-type); it reads CISCRQRKAKCDLGTGPDGLPLGPPCAKCRREQKPC. Disordered stretches follow at residues 108 to 142 and 661 to 683; these read SQED…QIDL and REST…DEHA.

It localises to the nucleus. In terms of biological role, transcription factor; part of the L-tyrosine degradation gene cluster that mediates the biosynthesis of the brownish pigment pyomelanin as an alternative melanin. Acts as a transcriptional activator for the genes of the tyrosine degradation cluster. This Aspergillus fumigatus (strain ATCC MYA-4609 / CBS 101355 / FGSC A1100 / Af293) (Neosartorya fumigata) protein is Transcription factor hmgR.